The primary structure comprises 834 residues: Probable phosphoenolpyruvate synthase (834 aa).

Residue H447 is the Tele-phosphohistidine intermediate of the active site. 7 residues coordinate substrate: R550, R598, E699, G720, S721, N722, and D723. E699 serves as a coordination point for Mg(2+). D723 is a Mg(2+) binding site. The active-site Proton donor is the C772.

The protein belongs to the PEP-utilizing enzyme family. In terms of assembly, homooligomer. Forms a large complex of about 2000 kDa. Mg(2+) is required as a cofactor. Post-translationally, the N-terminus is blocked.

The enzyme catalyses pyruvate + ATP + H2O = phosphoenolpyruvate + AMP + phosphate + 2 H(+). It functions in the pathway carbohydrate biosynthesis; gluconeogenesis. Catalyzes the phosphorylation of pyruvate to phosphoenolpyruvate. In Staphylothermus marinus (strain ATCC 43588 / DSM 3639 / JCM 9404 / F1), this protein is Probable phosphoenolpyruvate synthase (ppsA).